Here is a 401-residue protein sequence, read N- to C-terminus: Succinyl-diaminopimelate desuccinylase (401 aa).

His-82 contacts Zn(2+). Residue Asp-84 is part of the active site. Zn(2+) is bound at residue Asp-115. The active-site Proton acceptor is Glu-149. Positions 150, 178, and 364 each coordinate Zn(2+).

This sequence belongs to the peptidase M20A family. DapE subfamily. Homodimer. The cofactor is Zn(2+). Co(2+) serves as cofactor.

It carries out the reaction N-succinyl-(2S,6S)-2,6-diaminopimelate + H2O = (2S,6S)-2,6-diaminopimelate + succinate. It functions in the pathway amino-acid biosynthesis; L-lysine biosynthesis via DAP pathway; LL-2,6-diaminopimelate from (S)-tetrahydrodipicolinate (succinylase route): step 3/3. Functionally, catalyzes the hydrolysis of N-succinyl-L,L-diaminopimelic acid (SDAP), forming succinate and LL-2,6-diaminopimelate (DAP), an intermediate involved in the bacterial biosynthesis of lysine and meso-diaminopimelic acid, an essential component of bacterial cell walls. The protein is Succinyl-diaminopimelate desuccinylase of Verminephrobacter eiseniae (strain EF01-2).